The sequence spans 238 residues: Type III secretion protein hrcQa (238 aa).

The interval 66–238 is hrcQa-C; it reads DAEALLSLLG…SHEEHSHHEY (173 aa).

As to quaternary structure, interacts with hrcQb.

It localises to the cell inner membrane. In terms of biological role, component of the type III secretion system, which is required for effector protein delivery, parasitism, and pathogenicity. Probably participates in the formation of a C-ring-like assembly along with hrcQb. This chain is Type III secretion protein hrcQa (hrcQa), found in Pseudomonas syringae pv. syringae.